A 340-amino-acid chain; its full sequence is Anthranilate phosphoribosyltransferase (340 aa).

Residues Gly-81, 84-85, Thr-89, 91-94, 109-117, and Ser-121 each bind 5-phospho-alpha-D-ribose 1-diphosphate; these read GD, NIST, and KHGNRGATS. Gly-81 serves as a coordination point for anthranilate. Mg(2+) is bound at residue Ser-93. An anthranilate-binding site is contributed by Asn-112. Position 167 (Arg-167) interacts with anthranilate. Asp-225 and Glu-226 together coordinate Mg(2+).

The protein belongs to the anthranilate phosphoribosyltransferase family. Homodimer. It depends on Mg(2+) as a cofactor.

It carries out the reaction N-(5-phospho-beta-D-ribosyl)anthranilate + diphosphate = 5-phospho-alpha-D-ribose 1-diphosphate + anthranilate. Its pathway is amino-acid biosynthesis; L-tryptophan biosynthesis; L-tryptophan from chorismate: step 2/5. Catalyzes the transfer of the phosphoribosyl group of 5-phosphorylribose-1-pyrophosphate (PRPP) to anthranilate to yield N-(5'-phosphoribosyl)-anthranilate (PRA). This is Anthranilate phosphoribosyltransferase from Methanocorpusculum labreanum (strain ATCC 43576 / DSM 4855 / Z).